A 4466-amino-acid chain; its full sequence is Dynein beta chain, ciliary (4466 aa).

The segment at 1–1813 (MGDVVDARLD…YANICDAQFK (1813 aa)) is stem. 154–161 (AGQVKGKT) is a binding site for ATP. Coiled-coil stretches lie at residues 482-502 (QEFL…DRRL), 627-643 (QKYE…EQKV), 734-805 (VLEV…WTKQ), 1036-1056 (TLDQ…EADE), 1306-1337 (WLEI…AWDA), and 1443-1468 (LLKS…MTSK). AAA regions lie at residues 1814-2035 (YSYE…VLVV), 2095-2316 (KVVK…IRFK), 2422-2669 (ELDP…VFQG), and 2767-3016 (TYNE…ERRY). ATP is bound by residues 1852–1859 (GPAGTGKT), 2133–2140 (GNAGTGKS), 2460–2467 (GNAGLGKS), and 2805–2812 (GVGGSGKQ). Coiled-coil stretches lie at residues 3033–3134 (SLLA…AKAE), 3263–3325 (EPKR…SRTI), and 3573–3642 (QERP…EEAK). The interval 3033-3325 (SLLAMKSKEL…QEAEATSRTI (293 aa)) is stalk. AAA stretches follow at residues 3409-3636 (LTDD…EISV) and 3846-4072 (VRNF…VLYN).

Belongs to the dynein heavy chain family. In terms of assembly, consists of at least two heavy chains (alpha and beta), three intermediate chains and several light chains.

The protein localises to the cell projection. It localises to the cilium. It is found in the flagellum. The protein resides in the cytoplasm. Its subcellular location is the cytoskeleton. The protein localises to the flagellum axoneme. In terms of biological role, force generating protein of eukaryotic cilia and flagella. Produces force towards the minus ends of microtubules. Dynein has ATPase activity; the force-producing power stroke is thought to occur on release of ADP. The chain is Dynein beta chain, ciliary from Heliocidaris crassispina (Sea urchin).